We begin with the raw amino-acid sequence, 94 residues long: Large ribosomal subunit protein bL25 (94 aa).

Belongs to the bacterial ribosomal protein bL25 family. As to quaternary structure, part of the 50S ribosomal subunit; part of the 5S rRNA/L5/L18/L25 subcomplex. Contacts the 5S rRNA. Binds to the 5S rRNA independently of L5 and L18.

Its function is as follows. This is one of the proteins that binds to the 5S RNA in the ribosome where it forms part of the central protuberance. The protein is Large ribosomal subunit protein bL25 of Escherichia coli O6:K15:H31 (strain 536 / UPEC).